Reading from the N-terminus, the 599-residue chain is Sulfite reductase [NADPH] flavoprotein alpha-component (599 aa).

Residues 64–202 (VTLISASQTG…AASEWRARVV (139 aa)) form the Flavodoxin-like domain. FMN-binding positions include 70–75 (SQTGNA), 117–120 (STQG), and 153–162 (LGDTSYEFFC). One can recognise an FAD-binding FR-type domain in the interval 234-448 (DAPLAATLSV…IEHNDNFRLP (215 aa)). FAD-binding positions include Thr-322, Ala-356, 386–389 (RLYS), 404–406 (TVG), Tyr-410, and 419–422 (GGAS). NADP(+)-binding positions include 519-520 (SR), 525-529 (KIYVQ), and Asp-561. Tyr-599 serves as a coordination point for FAD.

The protein belongs to the NADPH-dependent sulphite reductase flavoprotein subunit CysJ family. This sequence in the N-terminal section; belongs to the flavodoxin family. It in the C-terminal section; belongs to the flavoprotein pyridine nucleotide cytochrome reductase family. Alpha(8)-beta(8). The alpha component is a flavoprotein, the beta component is a hemoprotein. The cofactor is FAD. Requires FMN as cofactor.

It catalyses the reaction hydrogen sulfide + 3 NADP(+) + 3 H2O = sulfite + 3 NADPH + 4 H(+). It functions in the pathway sulfur metabolism; hydrogen sulfide biosynthesis; hydrogen sulfide from sulfite (NADPH route): step 1/1. Its function is as follows. Component of the sulfite reductase complex that catalyzes the 6-electron reduction of sulfite to sulfide. This is one of several activities required for the biosynthesis of L-cysteine from sulfate. The flavoprotein component catalyzes the electron flow from NADPH -&gt; FAD -&gt; FMN to the hemoprotein component. In Salmonella paratyphi B (strain ATCC BAA-1250 / SPB7), this protein is Sulfite reductase [NADPH] flavoprotein alpha-component.